A 232-amino-acid chain; its full sequence is ATP-dependent Clp protease proteolytic subunit 2 (232 aa).

Residue Ser-124 is the Nucleophile of the active site. His-149 is an active-site residue.

It belongs to the peptidase S14 family. As to quaternary structure, fourteen ClpP subunits assemble into 2 heptameric rings which stack back to back to give a disk-like structure with a central cavity, resembling the structure of eukaryotic proteasomes.

The protein localises to the cytoplasm. It catalyses the reaction Hydrolysis of proteins to small peptides in the presence of ATP and magnesium. alpha-casein is the usual test substrate. In the absence of ATP, only oligopeptides shorter than five residues are hydrolyzed (such as succinyl-Leu-Tyr-|-NHMec, and Leu-Tyr-Leu-|-Tyr-Trp, in which cleavage of the -Tyr-|-Leu- and -Tyr-|-Trp bonds also occurs).. In terms of biological role, cleaves peptides in various proteins in a process that requires ATP hydrolysis. Has a chymotrypsin-like activity. Plays a major role in the degradation of misfolded proteins. The sequence is that of ATP-dependent Clp protease proteolytic subunit 2 from Nostoc sp. (strain PCC 7120 / SAG 25.82 / UTEX 2576).